The primary structure comprises 173 residues: Dual-action ribosomal maturation protein DarP (173 aa).

It belongs to the DarP family.

It is found in the cytoplasm. Functionally, member of a network of 50S ribosomal subunit biogenesis factors which assembles along the 30S-50S interface, preventing incorrect 23S rRNA structures from forming. Promotes peptidyl transferase center (PTC) maturation. This is Dual-action ribosomal maturation protein DarP from Pseudomonas putida (strain W619).